A 504-amino-acid chain; its full sequence is Maturase K (504 aa).

Belongs to the intron maturase 2 family. MatK subfamily.

The protein localises to the plastid. Its subcellular location is the chloroplast. Usually encoded in the trnK tRNA gene intron. Probably assists in splicing its own and other chloroplast group II introns. The sequence is that of Maturase K from Arabidopsis halleri.